The primary structure comprises 440 residues: 3-phosphoshikimate 1-carboxyvinyltransferase (440 aa).

3 residues coordinate 3-phosphoshikimate: K26, S27, and R31. K26 serves as a coordination point for phosphoenolpyruvate. Residues G99 and R127 each contribute to the phosphoenolpyruvate site. 3-phosphoshikimate-binding residues include S172, Q174, D320, and K347. A phosphoenolpyruvate-binding site is contributed by Q174. D320 acts as the Proton acceptor in catalysis. Residues R351 and R392 each coordinate phosphoenolpyruvate.

It belongs to the EPSP synthase family. In terms of assembly, monomer.

The protein localises to the cytoplasm. The catalysed reaction is 3-phosphoshikimate + phosphoenolpyruvate = 5-O-(1-carboxyvinyl)-3-phosphoshikimate + phosphate. The protein operates within metabolic intermediate biosynthesis; chorismate biosynthesis; chorismate from D-erythrose 4-phosphate and phosphoenolpyruvate: step 6/7. Functionally, catalyzes the transfer of the enolpyruvyl moiety of phosphoenolpyruvate (PEP) to the 5-hydroxyl of shikimate-3-phosphate (S3P) to produce enolpyruvyl shikimate-3-phosphate and inorganic phosphate. The protein is 3-phosphoshikimate 1-carboxyvinyltransferase of Xanthomonas oryzae pv. oryzae (strain MAFF 311018).